Reading from the N-terminus, the 493-residue chain is 3-octaprenyl-4-hydroxybenzoate carboxy-lyase (493 aa).

Asn177 contributes to the Mn(2+) binding site. Prenylated FMN contacts are provided by residues 180–182 (IYR), 194–196 (RWL), and 199–200 (RG). Glu243 provides a ligand contact to Mn(2+). Asp292 functions as the Proton donor in the catalytic mechanism.

It belongs to the UbiD family. As to quaternary structure, homohexamer. Requires prenylated FMN as cofactor. The cofactor is Mn(2+).

It is found in the cell membrane. The catalysed reaction is a 4-hydroxy-3-(all-trans-polyprenyl)benzoate + H(+) = a 2-(all-trans-polyprenyl)phenol + CO2. Its pathway is cofactor biosynthesis; ubiquinone biosynthesis. Functionally, catalyzes the decarboxylation of 3-octaprenyl-4-hydroxy benzoate to 2-octaprenylphenol, an intermediate step in ubiquinone biosynthesis. This chain is 3-octaprenyl-4-hydroxybenzoate carboxy-lyase, found in Colwellia psychrerythraea (strain 34H / ATCC BAA-681) (Vibrio psychroerythus).